Reading from the N-terminus, the 232-residue chain is Large ribosomal subunit protein uL1 (232 aa).

Belongs to the universal ribosomal protein uL1 family. Part of the 50S ribosomal subunit.

In terms of biological role, binds directly to 23S rRNA. The L1 stalk is quite mobile in the ribosome, and is involved in E site tRNA release. Functionally, protein L1 is also a translational repressor protein, it controls the translation of the L11 operon by binding to its mRNA. The sequence is that of Large ribosomal subunit protein uL1 from Bartonella bacilliformis (strain ATCC 35685 / KC583 / Herrer 020/F12,63).